The primary structure comprises 168 residues: uncharacterized protein (168 aa).

This is an uncharacterized protein from Bacillus subtilis (strain 168).